The sequence spans 665 residues: Protein Fe65 homolog (665 aa).

Over residues 1–12 (MREGTPRVRIEV) the composition is skewed to basic and acidic residues. Disordered stretches follow at residues 1–43 (MREG…DTAT) and 90–111 (SRGYSSAGRGQKGRREEERRRN). The span at 14-24 (KGSNRPSQFVS) shows a compositional bias: polar residues. Composition is skewed to basic and acidic residues over residues 27–40 (EEQRLQRVQSRDSD) and 102–111 (GRREEERRRN). Positions 233–266 (KDLPPGWEKHEDPQGYSYYWHVDSGTIQRQPPPP) constitute a WW domain. PID domains are found at residues 330-456 (VRFA…RDIC) and 499-615 (FLGV…VLDA).

As to quaternary structure, interacts (via PID 2 domain) with apl-1 (via cytoplasmic domain). Post-translationally, phosphorylated. In terms of tissue distribution, expressed in the pharynx (including pharyngeal muscle and nerve cells), ventral nerve cord and tail neurons.

The protein localises to the cytoplasm. It localises to the cytoskeleton. Modulates pharyngeal pumping activity, at least in part by regulating expression of the acetylcholinesterase genes ace-1 and ace-2. This is Protein Fe65 homolog from Caenorhabditis elegans.